A 345-amino-acid chain; its full sequence is S-adenosylmethionine:tRNA ribosyltransferase-isomerase (345 aa).

The protein belongs to the QueA family. Monomer.

It localises to the cytoplasm. It catalyses the reaction 7-aminomethyl-7-carbaguanosine(34) in tRNA + S-adenosyl-L-methionine = epoxyqueuosine(34) in tRNA + adenine + L-methionine + 2 H(+). The protein operates within tRNA modification; tRNA-queuosine biosynthesis. In terms of biological role, transfers and isomerizes the ribose moiety from AdoMet to the 7-aminomethyl group of 7-deazaguanine (preQ1-tRNA) to give epoxyqueuosine (oQ-tRNA). In Acidiphilium cryptum (strain JF-5), this protein is S-adenosylmethionine:tRNA ribosyltransferase-isomerase.